Here is a 136-residue protein sequence, read N- to C-terminus: Small ribosomal subunit protein uS12 (136 aa).

The residue at position 89 (Asp89) is a 3-methylthioaspartic acid. The disordered stretch occupies residues 101 to 136; it reads SLDTSGVADRKQSRSKYGAKQPKAGVPAPVKGKGKR.

This sequence belongs to the universal ribosomal protein uS12 family. Part of the 30S ribosomal subunit. Contacts proteins S8 and S17. May interact with IF1 in the 30S initiation complex.

With S4 and S5 plays an important role in translational accuracy. Its function is as follows. Interacts with and stabilizes bases of the 16S rRNA that are involved in tRNA selection in the A site and with the mRNA backbone. Located at the interface of the 30S and 50S subunits, it traverses the body of the 30S subunit contacting proteins on the other side and probably holding the rRNA structure together. The combined cluster of proteins S8, S12 and S17 appears to hold together the shoulder and platform of the 30S subunit. This chain is Small ribosomal subunit protein uS12, found in Pelodictyon phaeoclathratiforme (strain DSM 5477 / BU-1).